The sequence spans 389 residues: Probable L-tyrosine/L-aspartate decarboxylase (389 aa).

An N6-(pyridoxal phosphate)lysine modification is found at Lys-233.

It belongs to the group II decarboxylase family. MfnA subfamily. Requires pyridoxal 5'-phosphate as cofactor.

The catalysed reaction is L-tyrosine + H(+) = tyramine + CO2. The enzyme catalyses L-aspartate + H(+) = beta-alanine + CO2. The protein operates within cofactor biosynthesis; methanofuran biosynthesis. Its pathway is cofactor biosynthesis; coenzyme A biosynthesis. In terms of biological role, catalyzes the decarboxylation of L-tyrosine to produce tyramine for methanofuran biosynthesis. Can also catalyze the decarboxylation of L-aspartate to produce beta-alanine for coenzyme A (CoA) biosynthesis. The chain is Probable L-tyrosine/L-aspartate decarboxylase from Methanosphaera stadtmanae (strain ATCC 43021 / DSM 3091 / JCM 11832 / MCB-3).